Here is a 442-residue protein sequence, read N- to C-terminus: Probable serine/threonine-protein kinase kinase DDB_G0280643 (442 aa).

A Protein kinase domain is found at 74–398 (IDPNTIVDCG…VNEILESPYF (325 aa)). ATP contacts are provided by residues 80-88 (VDCGTNGIM) and Lys103. Asp231 (proton acceptor) is an active-site residue.

The protein belongs to the protein kinase superfamily. CMGC Ser/Thr protein kinase family. MAP kinase subfamily.

It carries out the reaction L-seryl-[protein] + ATP = O-phospho-L-seryl-[protein] + ADP + H(+). The catalysed reaction is L-threonyl-[protein] + ATP = O-phospho-L-threonyl-[protein] + ADP + H(+). This chain is Probable serine/threonine-protein kinase kinase DDB_G0280643, found in Dictyostelium discoideum (Social amoeba).